The chain runs to 359 residues: Phospho-N-acetylmuramoyl-pentapeptide-transferase (359 aa).

Transmembrane regions (helical) follow at residues 3–23 (QILI…PVLI), 55–75 (VAIV…GVVI), 84–104 (GLLV…DDLI), 117–137 (TAKT…ALQF), 156–176 (IATV…VVSA), 190–210 (LAAG…FWQF), 231–251 (LAII…WNAA), 255–275 (IFMG…LSVT), 283–303 (VVLG…ILAF), and 330–350 (VIIR…ALFY).

This sequence belongs to the glycosyltransferase 4 family. MraY subfamily. Requires Mg(2+) as cofactor.

The protein localises to the cell membrane. The enzyme catalyses UDP-N-acetyl-alpha-D-muramoyl-L-alanyl-gamma-D-glutamyl-meso-2,6-diaminopimeloyl-D-alanyl-D-alanine + di-trans,octa-cis-undecaprenyl phosphate = di-trans,octa-cis-undecaprenyl diphospho-N-acetyl-alpha-D-muramoyl-L-alanyl-D-glutamyl-meso-2,6-diaminopimeloyl-D-alanyl-D-alanine + UMP. It functions in the pathway cell wall biogenesis; peptidoglycan biosynthesis. Its function is as follows. Catalyzes the initial step of the lipid cycle reactions in the biosynthesis of the cell wall peptidoglycan: transfers peptidoglycan precursor phospho-MurNAc-pentapeptide from UDP-MurNAc-pentapeptide onto the lipid carrier undecaprenyl phosphate, yielding undecaprenyl-pyrophosphoryl-MurNAc-pentapeptide, known as lipid I. In Mycolicibacterium vanbaalenii (strain DSM 7251 / JCM 13017 / BCRC 16820 / KCTC 9966 / NRRL B-24157 / PYR-1) (Mycobacterium vanbaalenii), this protein is Phospho-N-acetylmuramoyl-pentapeptide-transferase.